The sequence spans 604 residues: UvrABC system protein C (604 aa).

Residues Ala17 to Ile95 enclose the GIY-YIG domain. The region spanning Asp204–Ile239 is the UVR domain.

Belongs to the UvrC family. Interacts with UvrB in an incision complex.

It is found in the cytoplasm. Its function is as follows. The UvrABC repair system catalyzes the recognition and processing of DNA lesions. UvrC both incises the 5' and 3' sides of the lesion. The N-terminal half is responsible for the 3' incision and the C-terminal half is responsible for the 5' incision. This chain is UvrABC system protein C, found in Nitrosomonas europaea (strain ATCC 19718 / CIP 103999 / KCTC 2705 / NBRC 14298).